A 393-amino-acid chain; its full sequence is Pyrin and HIN domain-containing protein 1-like (393 aa).

The Pyrin domain occupies 1-87 (MVNEYKRIVL…ANKLKNEKAK (87 aa)). The disordered stretch occupies residues 82–188 (KNEKAKAKRK…TPTRSSSRIL (107 aa)). Over residues 87-102 (KAKRKGKGKRKTAAKR) the composition is skewed to basic residues. Composition is skewed to polar residues over residues 108–118 (PSTSQPMSTTN) and 126–151 (GRSTPDTQVAQLSLPTASRRNQAIQI). Positions 152–169 (SPTIASSSGQTSSRSSET) are enriched in low complexity. Residues 170–186 (LQSIIQSPETPTRSSSR) are compositionally biased toward polar residues. An HIN-200 domain is found at 219–393 (NVPKEPSEEN…NPGDKLRLML (175 aa)).

Belongs to the HIN-200 family.

It localises to the nucleus. This chain is Pyrin and HIN domain-containing protein 1-like, found in Mus musculus (Mouse).